Consider the following 238-residue polypeptide: Tabinhibitin 5 (238 aa).

The first 23 residues, 1 to 23, serve as a signal peptide directing secretion; the sequence is MTSILVSRFLLAALVLQYATIDA. The Cell attachment site motif lies at 32-34; it reads RGD. In terms of domain architecture, SCP spans 67–211; the sequence is LSKINDVRDH…KARALLTCNF (145 aa).

It belongs to the CRISP family. Expressed in salivary glands.

It is found in the secreted. Functionally, inhibits platelet aggregation induced by all agonists tested (ADP, arachidonic acid, the thromboxane A2 analog U46619, thrombin, and snake venom snaclecs (TMVA that activates platelet through GPIB, and stejnulxin that specifically acts through GPVI (GP6))). May act by competing with fibrinogen for binding to glycoprotein IIb/IIIa (ITGA2B/ITGB3). The protein is Tabinhibitin 5 of Tabanus yao (Horsefly).